The primary structure comprises 458 residues: Argininosuccinate lyase (458 aa).

Belongs to the lyase 1 family. Argininosuccinate lyase subfamily.

Its subcellular location is the cytoplasm. The catalysed reaction is 2-(N(omega)-L-arginino)succinate = fumarate + L-arginine. It participates in amino-acid biosynthesis; L-arginine biosynthesis; L-arginine from L-ornithine and carbamoyl phosphate: step 3/3. The protein is Argininosuccinate lyase of Actinobacillus pleuropneumoniae serotype 7 (strain AP76).